Here is a 163-residue protein sequence, read N- to C-terminus: Peptidyl-prolyl cis-trans isomerase (163 aa).

Residues 17-163 (KTAYATIKTN…IESVVFSSSL (147 aa)) enclose the PPIase cyclophilin-type domain.

It belongs to the cyclophilin-type PPIase family.

It catalyses the reaction [protein]-peptidylproline (omega=180) = [protein]-peptidylproline (omega=0). Functionally, PPIases accelerate the folding of proteins. It catalyzes the cis-trans isomerization of proline imidic peptide bonds in oligopeptides. This is Peptidyl-prolyl cis-trans isomerase (ppiA) from Helicobacter pylori (strain ATCC 700392 / 26695) (Campylobacter pylori).